We begin with the raw amino-acid sequence, 298 residues long: Ectoine dioxygenase (298 aa).

Basic and acidic residues predominate over residues 1 to 18 (MLQQAIDRDPVDRIDRYP). A disordered region spans residues 1-26 (MLQQAIDRDPVDRIDRYPTRTAEPAP). Glutamine 133 provides a ligand contact to L-ectoine. Histidine 150, aspartate 152, and histidine 251 together coordinate Fe cation.

It belongs to the PhyH family. EctD subfamily. Homodimer. Fe(2+) is required as a cofactor.

The catalysed reaction is L-ectoine + 2-oxoglutarate + O2 = 5-hydroxyectoine + succinate + CO2. Involved in the biosynthesis of 5-hydroxyectoine, called compatible solute, which helps organisms to survive extreme osmotic stress by acting as a highly soluble organic osmolyte. Catalyzes the 2-oxoglutarate-dependent selective hydroxylation of L-ectoine to yield (4S,5S)-5-hydroxyectoine. This Nocardia farcinica (strain IFM 10152) protein is Ectoine dioxygenase.